The primary structure comprises 150 residues: UPF0756 membrane protein Dd1591_2981 (150 aa).

4 helical membrane-spanning segments follow: residues 10–32 (ILLA…AILF), 51–71 (YGLS…IASG), 88–108 (LMAV…VVLM), and 127–147 (ALFR…SLLI).

This sequence belongs to the UPF0756 family.

The protein resides in the cell membrane. In Dickeya chrysanthemi (strain Ech1591) (Dickeya zeae (strain Ech1591)), this protein is UPF0756 membrane protein Dd1591_2981.